We begin with the raw amino-acid sequence, 731 residues long: Polyadenylate-binding protein, cytoplasmic and nuclear (731 aa).

Over residues 1-10 (MSADVSTTPA) the composition is skewed to polar residues. The segment at 1-51 (MSADVSTTPAAENVNGAAEASPAPAAAAPSATTPEVTAVENSTPAPAANQP) is disordered. The segment covering 17 to 39 (AAEASPAPAAAAPSATTPEVTAV) has biased composition (low complexity). RRM domains are found at residues 54–132 (ASLY…WSQR), 142–219 (GNVF…HHIS), 235–312 (TNVY…RAQK), and 338–472 (VNLY…LAQR). Disordered stretches follow at residues 369 to 429 (VMRD…SDKK) and 603 to 665 (GGRG…NAQT). Residues 616 to 627 (GMRGGPGYGQGR) show a composition bias toward gly residues. Residues 645 to 656 (QNAAAPAGPQEG) are compositionally biased toward low complexity. The PABC domain occupies 658–731 (AGGVNAQTLG…MRPLAFTMST (74 aa)).

Belongs to the polyadenylate-binding protein type-1 family.

Its subcellular location is the cytoplasm. The protein resides in the nucleus. Its function is as follows. Binds the poly(A) tail of mRNA. Appears to be an important mediator of the multiple roles of the poly(A) tail in mRNA biogenesis, stability and translation. In the nucleus, involved in both mRNA cleavage and polyadenylation. Is also required for efficient mRNA export to the cytoplasm. Acts in concert with a poly(A)-specific nuclease (PAN) to affect poly(A) tail shortening, which may occur concomitantly with either nucleocytoplasmic mRNA transport or translational initiation. In the cytoplasm, stimulates translation initiation and regulates mRNA decay through translation termination-coupled poly(A) shortening, probably mediated by PAN. This Aspergillus niger (strain ATCC MYA-4892 / CBS 513.88 / FGSC A1513) protein is Polyadenylate-binding protein, cytoplasmic and nuclear (pab1).